Consider the following 361-residue polypeptide: [LysW]-lysine hydrolase (361 aa).

His-67 is a Zn(2+) binding site. Asp-69 is a catalytic residue. Asp-91 lines the Zn(2+) pocket. Residue Glu-124 is the Proton acceptor of the active site. Positions 125, 148, and 326 each coordinate Zn(2+).

This sequence belongs to the peptidase M20A family. LysK subfamily. It depends on Zn(2+) as a cofactor. Co(2+) serves as cofactor.

It is found in the cytoplasm. It catalyses the reaction [amino-group carrier protein]-C-terminal-gamma-(L-lysyl)-L-glutamate + H2O = [amino-group carrier protein]-C-terminal-L-glutamate + L-lysine. It participates in amino-acid biosynthesis; L-lysine biosynthesis via AAA pathway; L-lysine from L-alpha-aminoadipate (Thermus route): step 5/5. Functionally, catalyzes the release of L-lysine from [LysW]-gamma-L-lysine. The sequence is that of [LysW]-lysine hydrolase from Thermus thermophilus (strain ATCC 27634 / DSM 579 / HB8).